A 291-amino-acid chain; its full sequence is Ribosomal protein L11 methyltransferase (291 aa).

Thr-136, Gly-159, Asp-181, and Asn-228 together coordinate S-adenosyl-L-methionine.

The protein belongs to the methyltransferase superfamily. PrmA family.

The protein localises to the cytoplasm. The catalysed reaction is L-lysyl-[protein] + 3 S-adenosyl-L-methionine = N(6),N(6),N(6)-trimethyl-L-lysyl-[protein] + 3 S-adenosyl-L-homocysteine + 3 H(+). Methylates ribosomal protein L11. The polypeptide is Ribosomal protein L11 methyltransferase (Sinorhizobium fredii (strain NBRC 101917 / NGR234)).